The following is a 223-amino-acid chain: Phosphoribosylformylglycinamidine synthase subunit PurQ (223 aa).

The 221-residue stretch at 3–223 (FAVLVFPGSN…MVKSWREQHV (221 aa)) folds into the Glutamine amidotransferase type-1 domain. Residue cysteine 85 is the Nucleophile of the active site. Residues histidine 193 and glutamate 195 contribute to the active site.

Part of the FGAM synthase complex composed of 1 PurL, 1 PurQ and 2 PurS subunits.

The protein resides in the cytoplasm. The catalysed reaction is N(2)-formyl-N(1)-(5-phospho-beta-D-ribosyl)glycinamide + L-glutamine + ATP + H2O = 2-formamido-N(1)-(5-O-phospho-beta-D-ribosyl)acetamidine + L-glutamate + ADP + phosphate + H(+). It catalyses the reaction L-glutamine + H2O = L-glutamate + NH4(+). Its pathway is purine metabolism; IMP biosynthesis via de novo pathway; 5-amino-1-(5-phospho-D-ribosyl)imidazole from N(2)-formyl-N(1)-(5-phospho-D-ribosyl)glycinamide: step 1/2. Part of the phosphoribosylformylglycinamidine synthase complex involved in the purines biosynthetic pathway. Catalyzes the ATP-dependent conversion of formylglycinamide ribonucleotide (FGAR) and glutamine to yield formylglycinamidine ribonucleotide (FGAM) and glutamate. The FGAM synthase complex is composed of three subunits. PurQ produces an ammonia molecule by converting glutamine to glutamate. PurL transfers the ammonia molecule to FGAR to form FGAM in an ATP-dependent manner. PurS interacts with PurQ and PurL and is thought to assist in the transfer of the ammonia molecule from PurQ to PurL. In Staphylococcus aureus (strain MSSA476), this protein is Phosphoribosylformylglycinamidine synthase subunit PurQ.